A 1268-amino-acid polypeptide reads, in one-letter code: Vigilin (1268 aa).

S2 carries the N-acetylserine modification. T8 carries the phosphothreonine modification. Residues S11, S31, and S35 each carry the phosphoserine modification. 14 consecutive KH domains span residues 158-229, 230-302, 303-371, 372-442, 443-514, 515-588, 589-660, 661-734, 735-807, 808-880, 881-979, 980-1059, 1060-1134, and 1135-1209; these read PKEH…RLEV, EKAF…AVEV, KKSQ…SVAA, PSWL…EINI, DHKF…DLII, EQRF…SVPI, FKQF…EVSI, PAKL…DIRA, KPEY…SMLV, DPKH…ECAI, PQKF…EVEV, PFDL…SVTV, DPKY…DVPL, and DHRV…ALQV. A phosphothreonine mark is found at T295 and T296. Position 317 is a phosphoserine (S317). Y437 is subject to Phosphotyrosine. S645 carries the post-translational modification Phosphoserine. A disordered region spans residues 910 to 947; the sequence is PDREENPVHSTEPAVQENGDEAGEGREAKDSDPGSPRR. Residues 932–947 are compositionally biased toward basic and acidic residues; that stretch reads GEGREAKDSDPGSPRR. Residue K991 is modified to N6-acetyllysine. Residues 1237-1249 are compositionally biased toward polar residues; the sequence is SSEKAPDMSSSEE. The interval 1237 to 1268 is disordered; sequence SSEKAPDMSSSEEFPSFGAQVAPKTLPWGPKR. Residues S1247 and S1252 each carry the phosphoserine modification.

Its subcellular location is the cytoplasm. It localises to the nucleus. Appears to play a role in cell sterol metabolism. It may function to protect cells from over-accumulation of cholesterol. This chain is Vigilin (HDLBP), found in Pongo abelii (Sumatran orangutan).